Here is a 504-residue protein sequence, read N- to C-terminus: Alpha-L-arabinofuranosidase C (504 aa).

Residues Asn-81, Asn-152, Asn-269, and Asn-329 are each glycosylated (N-linked (GlcNAc...) asparagine).

The protein belongs to the glycosyl hydrolase 51 family.

It localises to the secreted. It carries out the reaction Hydrolysis of terminal non-reducing alpha-L-arabinofuranoside residues in alpha-L-arabinosides.. The protein operates within glycan metabolism; L-arabinan degradation. Alpha-L-arabinofuranosidase involved in the degradation of arabinoxylan, a major component of plant hemicellulose. Acts only on small linear 1,5-alpha-linked L-arabinofuranosyl oligosaccharides. This is Alpha-L-arabinofuranosidase C (abfC) from Emericella nidulans (strain FGSC A4 / ATCC 38163 / CBS 112.46 / NRRL 194 / M139) (Aspergillus nidulans).